Here is a 378-residue protein sequence, read N- to C-terminus: 1-acyl-sn-glycerol-3-phosphate acyltransferase delta (378 aa).

A helical transmembrane segment spans residues 11–31 (FLCHLIFCYVFIVSGLIINTI). The short motif at 96–101 (HKFEID) is the HXXXXD motif element. Helical transmembrane passes span 125 to 145 (ELAY…VFCT), 307 to 327 (TLVN…RFVI), and 338 to 358 (LASF…MIGV).

Belongs to the 1-acyl-sn-glycerol-3-phosphate acyltransferase family.

Its subcellular location is the endoplasmic reticulum membrane. The enzyme catalyses a 1-acyl-sn-glycero-3-phosphate + an acyl-CoA = a 1,2-diacyl-sn-glycero-3-phosphate + CoA. The catalysed reaction is (4Z,7Z,10Z,13Z,16Z,19Z)-docosahexaenoyl-CoA + 1-hexadecanoyl-sn-glycero-3-phosphate = 1-hexadecanoyl-2-(4Z,7Z,10Z,13Z,16Z,19Z-docosahexaenoyl)-sn-glycero-3-phosphate + CoA. It catalyses the reaction 1-octadecanoyl-sn-glycero-3-phosphate + (9Z,12Z)-octadecadienoyl-CoA = 1-octadecanoyl-2-(9Z,12Z-octadecadienoyl)-sn-glycero-3-phosphate + CoA. It carries out the reaction 1-octadecanoyl-sn-glycero-3-phosphate + (4Z,7Z,10Z,13Z,16Z,19Z)-docosahexaenoyl-CoA = 1-octadecanoyl-2-(4Z,7Z,10Z,13Z,16Z,19Z-docosahexaenoyl)-sn-glycero-3-phosphate + CoA. The enzyme catalyses (4Z,7Z,10Z,13Z,16Z,19Z)-docosahexaenoyl-CoA + 1-(9Z-octadecenoyl)-sn-glycero-3-phosphate = 1-(9Z-octadecenoyl)-2-(4Z,7Z,10Z,13Z,16Z,19Z-docosahexaenoyl)-sn-glycero-3-phosphate + CoA. It functions in the pathway phospholipid metabolism; CDP-diacylglycerol biosynthesis; CDP-diacylglycerol from sn-glycerol 3-phosphate: step 2/3. Converts 1-acyl-sn-glycerol-3-phosphate (lysophosphatidic acid or LPA) into 1,2-diacyl-sn-glycerol-3-phosphate (phosphatidic acid or PA) by incorporating an acyl moiety at the sn-2 position of the glycerol backbone. Exhibits high acyl-CoA specificity for polyunsaturated fatty acyl-CoA, especially docosahexaenoyl-CoA (22:6-CoA, DHA-CoA). This chain is 1-acyl-sn-glycerol-3-phosphate acyltransferase delta (AGPAT4), found in Bos taurus (Bovine).